The primary structure comprises 352 residues: Dof zinc finger protein DOF1.8 (352 aa).

The interval 24–46 is disordered; that stretch reads LKQQSNPPSPATPVERKARPEKD. Residues 37 to 46 are compositionally biased toward basic and acidic residues; the sequence is VERKARPEKD. The Dof-type zinc-finger motif lies at 49–103; that stretch reads LNCPRCNSLNTKFCYYNNYSLTQPRYFCKDCRRYWTAGGSLRNIPVGGGVRKNKR. Positions 51, 54, 76, and 79 each coordinate Zn(2+). Disordered regions lie at residues 93–136 and 265–334; these read PVGG…PLPH and GGDP…VGFW. A compositionally biased stretch (low complexity) spans 104-129; it reads SSSNSSSSSPSSSSSSKKPLFANNNT. The segment covering 310 to 323 has biased composition (basic and acidic residues); the sequence is ENNDEHSDHEHEKE.

It is found in the nucleus. In terms of biological role, transcription factor that binds specifically to a 5'-AA[AG]G-3' consensus core sequence. The protein is Dof zinc finger protein DOF1.8 (DOF1.8) of Arabidopsis thaliana (Mouse-ear cress).